A 215-amino-acid chain; its full sequence is Ribonuclease HII (215 aa).

The region spanning K19–T214 is the RNase H type-2 domain. A divalent metal cation-binding residues include D25, E26, and D121.

Belongs to the RNase HII family. Requires Mn(2+) as cofactor. The cofactor is Mg(2+).

The protein localises to the cytoplasm. It catalyses the reaction Endonucleolytic cleavage to 5'-phosphomonoester.. Its function is as follows. Endonuclease that specifically degrades the RNA of RNA-DNA hybrids. This chain is Ribonuclease HII, found in Fusobacterium nucleatum subsp. nucleatum (strain ATCC 25586 / DSM 15643 / BCRC 10681 / CIP 101130 / JCM 8532 / KCTC 2640 / LMG 13131 / VPI 4355).